Here is a 295-residue protein sequence, read N- to C-terminus: Protoheme IX farnesyltransferase (295 aa).

9 helical membrane-spanning segments follow: residues 24–43, 47–69, 94–114, 117–137, 144–164, 171–191, 216–236, 241–261, and 272–292; these read IMYL…PGSI, LALI…NMWY, SALE…AIAV, ISAI…TIWL, NIVI…AVVT, GFVL…ALSL, KYIL…ALFL, FYLG…VSIM, and MFSY…LCSI.

It belongs to the UbiA prenyltransferase family. Protoheme IX farnesyltransferase subfamily.

The protein localises to the cell membrane. The catalysed reaction is heme b + (2E,6E)-farnesyl diphosphate + H2O = Fe(II)-heme o + diphosphate. Its pathway is porphyrin-containing compound metabolism; heme O biosynthesis; heme O from protoheme: step 1/1. Functionally, converts heme B (protoheme IX) to heme O by substitution of the vinyl group on carbon 2 of heme B porphyrin ring with a hydroxyethyl farnesyl side group. The protein is Protoheme IX farnesyltransferase of Wolbachia sp. subsp. Brugia malayi (strain TRS).